Consider the following 291-residue polypeptide: Feruloyl esterase B (291 aa).

An N-terminal signal peptide occupies residues 1 to 18 (MLVRSFLGFAVLAATCLA). Asparagine 117 carries an N-linked (GlcNAc...) asparagine glycan. The active-site Charge relay system is serine 136. A glycan (N-linked (GlcNAc...) asparagine) is linked at asparagine 179.

The protein belongs to the carbohydrate esterase 1 (CE1) family. Feruloyl esterase type B subfamily.

It localises to the secreted. The catalysed reaction is feruloyl-polysaccharide + H2O = ferulate + polysaccharide.. In terms of biological role, feruloyl esterase which acts in synergy with xylanases in degradation of plant cell walls. Hydrolyzes the ester linkage of hydroxycinnamic acids (ferulic acid (FA) and p-coumaric acid) and diferulates present in plant cell walls. Is active on substrates containing ferulic acid ester linked to the C-5 and C-2 linkages of arabinofuranose, while it was found capable of de-esterifying acetylated glucuronoxylans. Efficiently releases ferulic acid (FA) from destarched wheat bran when incubated with an M3 xylanase. The polypeptide is Feruloyl esterase B (Fae1a) (Thermothelomyces thermophilus (strain ATCC 42464 / BCRC 31852 / DSM 1799) (Sporotrichum thermophile)).